The chain runs to 364 residues: tRNA 2-selenouridine synthase (364 aa).

In terms of domain architecture, Rhodanese spans 14-137 (LLADTPLIDV…LRQTAIQATW (124 aa)). The S-selanylcysteine intermediate role is filled by Cys97.

It belongs to the SelU family. In terms of assembly, monomer.

The catalysed reaction is 5-methylaminomethyl-2-thiouridine(34) in tRNA + selenophosphate + (2E)-geranyl diphosphate + H2O + H(+) = 5-methylaminomethyl-2-selenouridine(34) in tRNA + (2E)-thiogeraniol + phosphate + diphosphate. The enzyme catalyses 5-methylaminomethyl-2-thiouridine(34) in tRNA + (2E)-geranyl diphosphate = 5-methylaminomethyl-S-(2E)-geranyl-thiouridine(34) in tRNA + diphosphate. It catalyses the reaction 5-methylaminomethyl-S-(2E)-geranyl-thiouridine(34) in tRNA + selenophosphate + H(+) = 5-methylaminomethyl-2-(Se-phospho)selenouridine(34) in tRNA + (2E)-thiogeraniol. It carries out the reaction 5-methylaminomethyl-2-(Se-phospho)selenouridine(34) in tRNA + H2O = 5-methylaminomethyl-2-selenouridine(34) in tRNA + phosphate. In terms of biological role, involved in the post-transcriptional modification of the uridine at the wobble position (U34) of tRNA(Lys), tRNA(Glu) and tRNA(Gln). Catalyzes the conversion of 2-thiouridine (S2U-RNA) to 2-selenouridine (Se2U-RNA). Acts in a two-step process involving geranylation of 2-thiouridine (S2U) to S-geranyl-2-thiouridine (geS2U) and subsequent selenation of the latter derivative to 2-selenouridine (Se2U) in the tRNA chain. This chain is tRNA 2-selenouridine synthase, found in Salmonella choleraesuis (strain SC-B67).